The sequence spans 568 residues: Kinetochore protein NDC80 homolog (568 aa).

The segment at 1–59 (MRGGAAGKRRTTVGFGGAPPPPPPSIEQQRHLFNSRDSDASFASSRPSSIGLGGRGASD) is disordered. Basic and acidic residues predominate over residues 28–39 (QQRHLFNSRDSD). Positions 40–49 (ASFASSRPSS) are enriched in low complexity. 2 coiled-coil regions span residues 241–334 (KESL…AEVA) and 433–469 (IESK…TKCD).

Belongs to the NDC80/HEC1 family. Component of the NDC80 complex, which consists of NDC80, NUF2, SPC24 and SPC25.

The protein resides in the chromosome. It localises to the centromere. In terms of biological role, acts as a component of the essential kinetochore-associated NDC80 complex, which is required for chromosome segregation and spindle checkpoint activity to ensure proper cell division. The protein is Kinetochore protein NDC80 homolog of Arabidopsis thaliana (Mouse-ear cress).